A 351-amino-acid chain; its full sequence is AA9 family lytic polysaccharide monooxygenase A (351 aa).

His1 lines the Cu(2+) pocket. Residues Cys52 and Cys178 are joined by a disulfide bond. An N-linked (GlcNAc...) asparagine glycan is attached at Asn53. His86 is a Cu(2+) binding site. N-linked (GlcNAc...) asparagine glycosylation is present at Asn138. His164 and Gln173 together coordinate O2. Tyr175 lines the Cu(2+) pocket. Residue Ser280 is the site of GPI-anchor amidated serine attachment. The propeptide at 281-351 (SAIGTSTASS…RSGTLGRLSF (71 aa)) is removed in mature form.

Belongs to the polysaccharide monooxygenase AA9 family. Requires Cu(2+) as cofactor.

The protein localises to the cell membrane. It catalyses the reaction [(1-&gt;4)-beta-D-glucosyl]n+m + reduced acceptor + O2 = 4-dehydro-beta-D-glucosyl-[(1-&gt;4)-beta-D-glucosyl]n-1 + [(1-&gt;4)-beta-D-glucosyl]m + acceptor + H2O.. Lytic polysaccharide monooxygenase (LPMO) that depolymerizes crystalline and amorphous polysaccharides via the oxidation of scissile alpha- or beta-(1-4)-glycosidic bonds, yielding C1 or C4 oxidation products. Catalysis by LPMOs requires the reduction of the active-site copper from Cu(II) to Cu(I) by a reducing agent and H(2)O(2) or O(2) as a cosubstrate. In terms of biological role, has broad specificity, cleaving at any position along the beta-glucan backbone of xyloglucan, regardless of substitutions. Shows minor activity on glucomannan. This is AA9 family lytic polysaccharide monooxygenase A from Gloeophyllum trabeum (Brown rot fungus).